A 957-amino-acid chain; its full sequence is ERC protein 2 (957 aa).

A compositionally biased stretch (polar residues) spans 1–13 (MYGSARTITNLEG). The disordered stretch occupies residues 1–44 (MYGSARTITNLEGSPSRSPRLPRSPRLGHRRTSSGGGGGTGKTL). Low complexity predominate over residues 14 to 25 (SPSRSPRLPRSP). Phosphoserine is present on residues Ser-65 and Ser-666. Residues 140–917 (RQVRDSTMLD…RMKLMADNYD (778 aa)) adopt a coiled-coil conformation. Positions 918–957 (DDHHHYHHHHHHHHHRSPGRSQHSNHRPSPDQDDEEGIWA) are disordered. The span at 922–943 (HYHHHHHHHHHRSPGRSQHSNH) shows a compositional bias: basic residues. The segment covering 948 to 957 (DQDDEEGIWA) has biased composition (acidic residues).

In terms of assembly, interacts with BSN, ERC1, PPFIA1, PPFIA2, PPFIA3 and PPFIA4. Interacts through its C-terminus with the PDZ domain of RIMS1. Part of a complex consisting of ERC2, RIMS1 and UNC13A.

The protein localises to the cytoplasm. The protein resides in the synapse. It localises to the presynaptic active zone. It is found in the cytoskeleton. Functionally, thought to be involved in the organization of the cytomatrix at the nerve terminals active zone (CAZ) which regulates neurotransmitter release. Seems to act together with BSN. May recruit liprin-alpha proteins to the CAZ. This chain is ERC protein 2 (ERC2), found in Homo sapiens (Human).